The sequence spans 608 residues: Threonine--tRNA ligase (608 aa).

The tract at residues methionine 1 to aspartate 143 is editing domain. 2 catalytic regions span residues proline 194–proline 490 and lysine 195–proline 490. Zn(2+) is bound by residues cysteine 287, histidine 338, and histidine 459.

This sequence belongs to the class-II aminoacyl-tRNA synthetase family. As to quaternary structure, homodimer. Zn(2+) is required as a cofactor.

Its subcellular location is the cytoplasm. It catalyses the reaction tRNA(Thr) + L-threonine + ATP = L-threonyl-tRNA(Thr) + AMP + diphosphate + H(+). Functionally, catalyzes the attachment of threonine to tRNA(Thr) in a two-step reaction: L-threonine is first activated by ATP to form Thr-AMP and then transferred to the acceptor end of tRNA(Thr). Also edits incorrectly charged L-seryl-tRNA(Thr). The sequence is that of Threonine--tRNA ligase from Pyrobaculum aerophilum (strain ATCC 51768 / DSM 7523 / JCM 9630 / CIP 104966 / NBRC 100827 / IM2).